We begin with the raw amino-acid sequence, 124 residues long: MSIENLVEEIGKLTLTEAAALVKALEEKFGVSAAPVAVAAGVAAPAGDVAAVEEQTEFTVVLVAAGESKINVIKVVRSITGLGLKEAKDLVDGAPKNVKEAISKDEAEKIAKELKDAGASVEVK.

The protein belongs to the bacterial ribosomal protein bL12 family. Homodimer. Part of the ribosomal stalk of the 50S ribosomal subunit. Forms a multimeric L10(L12)X complex, where L10 forms an elongated spine to which 2 to 4 L12 dimers bind in a sequential fashion. Binds GTP-bound translation factors.

Its function is as follows. Forms part of the ribosomal stalk which helps the ribosome interact with GTP-bound translation factors. Is thus essential for accurate translation. This is Large ribosomal subunit protein bL12 from Chlorobium chlorochromatii (strain CaD3).